We begin with the raw amino-acid sequence, 397 residues long: Meiotic driver wtf28 (397 aa).

2 disordered regions span residues 1–41 (MKNK…GNTL) and 65–102 (NWNK…SGTA). Positions 11-29 (SMDELSTKNDNEIDLEKGP) are enriched in basic and acidic residues. The next 9 membrane-spanning stretches (helical) occupy residues 108–128 (FLIK…PAVC), 145–165 (WVYF…LWCF), 175–195 (VTVI…AQCV), 205–225 (CIKV…VGLY), 230–250 (DLVV…FGCV), 266–286 (SSIS…IWTL), 290–310 (LFGL…TKGL), 320–340 (ATGY…LFFY), and 357–377 (NGIA…ANAI).

This sequence belongs to the WTF family. Homomer. Forms protein aggregates. The two isoforms can interact with each other and with themselves. High sequence similarity is required for their interaction.

The protein resides in the spore membrane. Its subcellular location is the vacuole membrane. The protein localises to the ascus epiplasm. It is found in the cytoplasm. It localises to the endoplasmic reticulum membrane. Promotes unequal transmission of alleles from the parental zygote to progeny spores by acting as poison/antidote system where the poison and antidote proteins are produced from the same locus; the poison component is trans-acting and targets all spores within an ascus whereas the antidote component is spore-specific, leading to poisoning of all progeny that do not inherit the allele. Functionally, localizes isoform 2 to the vacuole thereby facilitating its degradation. Its function is as follows. Forms toxic aggregates that disrupt spore maturation. The chain is Meiotic driver wtf28 from Schizosaccharomyces kambucha (Fission yeast).